The chain runs to 531 residues: Chaperonin GroEL 2 (531 aa).

ATP is bound by residues 30-33, 87-91, G414, and D494; these read TLGP and DGTTT.

This sequence belongs to the chaperonin (HSP60) family. In terms of assembly, forms a cylinder of 14 subunits composed of two heptameric rings stacked back-to-back. Interacts with the co-chaperonin GroES.

It localises to the cytoplasm. The enzyme catalyses ATP + H2O + a folded polypeptide = ADP + phosphate + an unfolded polypeptide.. Together with its co-chaperonin GroES, plays an essential role in assisting protein folding. The GroEL-GroES system forms a nano-cage that allows encapsulation of the non-native substrate proteins and provides a physical environment optimized to promote and accelerate protein folding. This Cutibacterium acnes (strain DSM 16379 / KPA171202) (Propionibacterium acnes) protein is Chaperonin GroEL 2.